The sequence spans 399 residues: 1-deoxy-D-xylulose 5-phosphate reductoisomerase (399 aa).

The NADPH site is built by Thr10, Gly11, Ser12, Ile13, and Asn124. Lys125 contacts 1-deoxy-D-xylulose 5-phosphate. Glu126 contributes to the NADPH binding site. Mn(2+) is bound at residue Asp150. 1-deoxy-D-xylulose 5-phosphate is bound by residues Ser151, Glu152, Ser186, and His209. Glu152 lines the Mn(2+) pocket. Residue Gly215 participates in NADPH binding. 1-deoxy-D-xylulose 5-phosphate-binding residues include Ser222, Asn227, Lys228, and Glu231. Residue Glu231 participates in Mn(2+) binding.

This sequence belongs to the DXR family. It depends on Mg(2+) as a cofactor. Mn(2+) is required as a cofactor.

It catalyses the reaction 2-C-methyl-D-erythritol 4-phosphate + NADP(+) = 1-deoxy-D-xylulose 5-phosphate + NADPH + H(+). The protein operates within isoprenoid biosynthesis; isopentenyl diphosphate biosynthesis via DXP pathway; isopentenyl diphosphate from 1-deoxy-D-xylulose 5-phosphate: step 1/6. In terms of biological role, catalyzes the NADPH-dependent rearrangement and reduction of 1-deoxy-D-xylulose-5-phosphate (DXP) to 2-C-methyl-D-erythritol 4-phosphate (MEP). This chain is 1-deoxy-D-xylulose 5-phosphate reductoisomerase, found in Psychromonas ingrahamii (strain DSM 17664 / CCUG 51855 / 37).